Consider the following 396-residue polypeptide: MMTGKSAPRRLSIFGSTGSIGQNTLNVVDHLGGRENFEISVLTGSGNVELLARQAKSSGARLAVTANDRHYESLKSELSGTGIAVASGKSGLMEAADRDVDWVMAAIVGTAGLAPTLAAARRGADIALANKECLVSAGDLFIAAIREGGGRLLPVDSEHNAIFQVLEENQRHAVERVILTASGGPFRTASLRDMADVTVETARAHPNWSMGLKISIDSASMFNKALEMIEALHLFSLRPEQIEVIFHPQSIIHSMVGYTDGSVLAQLGAPDMRTAIGYALSFPRRPNLPVERLDFAKLARLDFEAPDEVRFPALRLARLAMTRGGVQGAVLNGAKEVALEAFIEGRLSFLAMAEVTERVMDDLAGLPQAAGMDDVFAADREARQRAAELMTLAIAE.

Residues Thr17, Gly18, Ser19, Ile20, Asn47, and Asn130 each contribute to the NADPH site. Lys131 is a binding site for 1-deoxy-D-xylulose 5-phosphate. Residue Glu132 coordinates NADPH. Asp156 contributes to the Mn(2+) binding site. 4 residues coordinate 1-deoxy-D-xylulose 5-phosphate: Ser157, Glu158, Ser182, and His205. Glu158 contributes to the Mn(2+) binding site. Residue Gly211 participates in NADPH binding. Residues Ser218, Asn223, Lys224, and Glu227 each coordinate 1-deoxy-D-xylulose 5-phosphate. Position 227 (Glu227) interacts with Mn(2+).

The protein belongs to the DXR family. Mg(2+) serves as cofactor. It depends on Mn(2+) as a cofactor.

The catalysed reaction is 2-C-methyl-D-erythritol 4-phosphate + NADP(+) = 1-deoxy-D-xylulose 5-phosphate + NADPH + H(+). Its pathway is isoprenoid biosynthesis; isopentenyl diphosphate biosynthesis via DXP pathway; isopentenyl diphosphate from 1-deoxy-D-xylulose 5-phosphate: step 1/6. Catalyzes the NADPH-dependent rearrangement and reduction of 1-deoxy-D-xylulose-5-phosphate (DXP) to 2-C-methyl-D-erythritol 4-phosphate (MEP). In Rhizobium johnstonii (strain DSM 114642 / LMG 32736 / 3841) (Rhizobium leguminosarum bv. viciae), this protein is 1-deoxy-D-xylulose 5-phosphate reductoisomerase.